Reading from the N-terminus, the 208-residue chain is Uracil phosphoribosyltransferase (208 aa).

5-phospho-alpha-D-ribose 1-diphosphate-binding positions include Arg-78, Arg-103, and 130-138 (DPMLATGGS). Uracil contacts are provided by residues Ile-193 and 198–200 (GDA). Asp-199 serves as a coordination point for 5-phospho-alpha-D-ribose 1-diphosphate.

This sequence belongs to the UPRTase family. It depends on Mg(2+) as a cofactor.

The catalysed reaction is UMP + diphosphate = 5-phospho-alpha-D-ribose 1-diphosphate + uracil. The protein operates within pyrimidine metabolism; UMP biosynthesis via salvage pathway; UMP from uracil: step 1/1. With respect to regulation, allosterically activated by GTP. In terms of biological role, catalyzes the conversion of uracil and 5-phospho-alpha-D-ribose 1-diphosphate (PRPP) to UMP and diphosphate. The sequence is that of Uracil phosphoribosyltransferase from Shewanella denitrificans (strain OS217 / ATCC BAA-1090 / DSM 15013).